A 530-amino-acid polypeptide reads, in one-letter code: Pyridoxine/pyridoxamine 5'-phosphate oxidase 1, chloroplastic (530 aa).

The N-terminal 64 residues, 1 to 64, are a transit peptide targeting the chloroplast; sequence MRNVIRRVTT…TLCTKVIIPN (64 aa). Met-65 is subject to N-acetylmethionine. Positions 81 to 297 constitute a YjeF N-terminal domain; the sequence is AAEIDETLMG…SVAEKYKLEL (217 aa). (6S)-NADPHX is bound at residue 131–135; it reads NNGGD. K(+)-binding residues include Asn-132 and Asp-196. Residues 200 to 206 and Asp-238 each bind (6S)-NADPHX; that span reads GFSFHGA. Ser-241 serves as a coordination point for K(+). Pyridoxal 5'-phosphate is bound at residue 247-250; that stretch reads EGDH. Residue 321-324 participates in substrate binding; it reads RVNY. Residue 325–327 participates in pyridoxal 5'-phosphate binding; it reads VSP. 374–377 serves as a coordination point for FMN; sequence RMVL. Lys-379 provides a ligand contact to pyridoxal 5'-phosphate. Residues 389 to 390, 395 to 396, and Gln-418 each bind FMN; these read FT and KK. Pyridoxal 5'-phosphate is bound by residues Tyr-436, Arg-440, and Ser-444. FMN contacts are provided by residues 453–454 and Trp-499; that span reads QS. A pyridoxal 5'-phosphate-binding site is contributed by 505–507; that stretch reads RLH. Position 509 (Arg-509) interacts with FMN.

In the N-terminal section; belongs to the NnrE/AIBP family. This sequence in the C-terminal section; belongs to the pyridoxamine 5'-phosphate oxidase family. As to quaternary structure, homodimer. It depends on FMN as a cofactor. Requires K(+) as cofactor. In terms of tissue distribution, expressed in leaves, stems, flowers and roots.

The protein localises to the plastid. Its subcellular location is the chloroplast. The enzyme catalyses pyridoxamine 5'-phosphate + O2 + H2O = pyridoxal 5'-phosphate + H2O2 + NH4(+). The catalysed reaction is pyridoxine 5'-phosphate + O2 = pyridoxal 5'-phosphate + H2O2. It catalyses the reaction (6R)-NADHX = (6S)-NADHX. It carries out the reaction (6R)-NADPHX = (6S)-NADPHX. It functions in the pathway cofactor metabolism; pyridoxal 5'-phosphate salvage; pyridoxal 5'-phosphate from pyridoxamine 5'-phosphate: step 1/1. Its pathway is cofactor metabolism; pyridoxal 5'-phosphate salvage; pyridoxal 5'-phosphate from pyridoxine 5'-phosphate: step 1/1. Its function is as follows. Catalyzes the oxidation of either pyridoxine 5'-phosphate (PNP) or pyridoxamine 5'-phosphate (PMP) into pyridoxal 5'-phosphate (PLP). Involved in the PLP salvage pathway. Has a higher preference for PNP over PMP. May also catalyze the epimerization of the S- and R-forms of NAD(P)HX, a damaged form of NAD(P)H that is a result of enzymatic or heat-dependent hydration. This is a prerequisite for the S-specific NAD(P)H-hydrate dehydratase to allow the repair of both epimers of NAD(P)HX. The chain is Pyridoxine/pyridoxamine 5'-phosphate oxidase 1, chloroplastic (PPOX1) from Arabidopsis thaliana (Mouse-ear cress).